The sequence spans 253 residues: 1-(5-phosphoribosyl)-5-[(5-phosphoribosylamino)methylideneamino] imidazole-4-carboxamide isomerase (253 aa).

Catalysis depends on D8, which acts as the Proton acceptor. D131 acts as the Proton donor in catalysis.

It belongs to the HisA/HisF family.

It is found in the cytoplasm. The catalysed reaction is 1-(5-phospho-beta-D-ribosyl)-5-[(5-phospho-beta-D-ribosylamino)methylideneamino]imidazole-4-carboxamide = 5-[(5-phospho-1-deoxy-D-ribulos-1-ylimino)methylamino]-1-(5-phospho-beta-D-ribosyl)imidazole-4-carboxamide. Its pathway is amino-acid biosynthesis; L-histidine biosynthesis; L-histidine from 5-phospho-alpha-D-ribose 1-diphosphate: step 4/9. This chain is 1-(5-phosphoribosyl)-5-[(5-phosphoribosylamino)methylideneamino] imidazole-4-carboxamide isomerase, found in Polynucleobacter asymbioticus (strain DSM 18221 / CIP 109841 / QLW-P1DMWA-1) (Polynucleobacter necessarius subsp. asymbioticus).